A 410-amino-acid chain; its full sequence is Voltage-dependent chloride channel 1, chloroplastic (410 aa).

Residues Met-1–Arg-110 lie on the Lumenal, thylakoid side of the membrane. Residues Val-111–Ser-131 traverse the membrane as a helical segment. Over Tyr-132–Ile-147 the chain is Stromal. Residues Leu-148–Phe-168 traverse the membrane as a helical segment. Topologically, residues Arg-169–Arg-315 are lumenal, thylakoid. The next 2 helical transmembrane spans lie at Phe-316 to Val-336 and Val-337 to Ile-357. The Lumenal, thylakoid segment spans residues Glu-358–Ser-410.

The protein belongs to the anion channel-forming bestrophin (TC 1.A.46) family. Voltage-dependent chloride channel subfamily. As to expression, mostly expressed in flowers and leaves and, to a lower extent, in stems and roots.

The protein localises to the plastid. It localises to the chloroplast thylakoid membrane. The catalysed reaction is chloride(in) = chloride(out). More active at positive than at negative voltages. Repressed by the general anion channel inhibitors dithiocyanatostilbene-2,20-disulphonic acid (DIDS) and niflumic acid. Its function is as follows. Voltage-dependent chloride (Cl) channel critical for proton motive force (PMF) partitioning across the thylakoid membrane by anion influx into the lumen during illumination, thus being required for photoprotection under fluctuating light conditions. Influences thylakoid ultrastructure, including lumen size and organization. During photosynthetic response on transition from dark to low light, involved in a sequential mechanism of adaptation; VCCN1 and CLCe first trigger the activation of photoprotection, which is later down-regulated by KEA3 to a low steady state, while adjusting electron transport. On transition from low to high light, accelerates the activation of photoprotection by building up a pH gradient across the thylakoid membrane. The polypeptide is Voltage-dependent chloride channel 1, chloroplastic (Arabidopsis thaliana (Mouse-ear cress)).